Consider the following 186-residue polypeptide: Large ribosomal subunit protein uL5c (186 aa).

The protein belongs to the universal ribosomal protein uL5 family. As to quaternary structure, part of the 50S ribosomal subunit; contacts the 5S rRNA.

It localises to the plastid. The protein resides in the chloroplast. Its function is as follows. Binds 5S rRNA, forms part of the central protuberance of the 50S subunit. This is Large ribosomal subunit protein uL5c (rpl5) from Chaetosphaeridium globosum (Charophycean green alga).